A 189-amino-acid chain; its full sequence is GMP synthase [glutamine-hydrolyzing] subunit A (189 aa).

The 189-residue stretch at 1 to 189 folds into the Glutamine amidotransferase type-1 domain; that stretch reads MIVILNNGGQ…CKKCGFEFEE (189 aa). Cysteine 76 (nucleophile) is an active-site residue. Catalysis depends on residues histidine 163 and glutamate 165.

In terms of assembly, heterodimer composed of a glutamine amidotransferase subunit (A) and a GMP-binding subunit (B).

The catalysed reaction is XMP + L-glutamine + ATP + H2O = GMP + L-glutamate + AMP + diphosphate + 2 H(+). It functions in the pathway purine metabolism; GMP biosynthesis; GMP from XMP (L-Gln route): step 1/1. Its function is as follows. Catalyzes the synthesis of GMP from XMP. This chain is GMP synthase [glutamine-hydrolyzing] subunit A, found in Methanococcus maripaludis (strain C6 / ATCC BAA-1332).